Here is a 372-residue protein sequence, read N- to C-terminus: Cytochrome b (372 aa).

4 helical membrane-spanning segments follow: residues 29-49 (FGSMLGLIYSIQIISGLILSW), 73-95 (WFIRFIHSSGVSLFMFIMYLHIL), 108-128 (VWYSGILLLFICMGSAFLGYV), and 174-194 (FFSFHYLLSLFIMVFILIHLI). 2 residues coordinate heme b: His79 and His93. His178 and His192 together coordinate heme b. Position 197 (His197) interacts with a ubiquinone. The next 4 membrane-spanning stretches (helical) occupy residues 220–240 (FSLKDTLVFVLVVFLYWFCIF), 284–301 (LGGVILMVMAILMLVFLG), 311–336 (MVKTLYWKLMLSSFLLVFIILTIMGG), and 344–363 (DILGNVNSVLYFFIYVIMLL).

This sequence belongs to the cytochrome b family. In terms of assembly, the main subunits of complex b-c1 are: cytochrome b, cytochrome c1 and the Rieske protein. It depends on heme b as a cofactor.

The protein localises to the mitochondrion inner membrane. Functionally, component of the ubiquinol-cytochrome c reductase complex (complex III or cytochrome b-c1 complex) that is part of the mitochondrial respiratory chain. The b-c1 complex mediates electron transfer from ubiquinol to cytochrome c. Contributes to the generation of a proton gradient across the mitochondrial membrane that is then used for ATP synthesis. The sequence is that of Cytochrome b (mt:Cyt-b) from Leptorhynchoides thecatus (Thorny-headed worm).